A 369-amino-acid chain; its full sequence is UDP-N-acetylglucosamine--N-acetylmuramyl-(pentapeptide) pyrophosphoryl-undecaprenol N-acetylglucosamine transferase (369 aa).

UDP-N-acetyl-alpha-D-glucosamine contacts are provided by residues 10-12, N124, S195, I252, and Q297; that span reads TGG.

The protein belongs to the glycosyltransferase 28 family. MurG subfamily.

The protein resides in the cell membrane. The enzyme catalyses Mur2Ac(oyl-L-Ala-gamma-D-Glu-L-Lys-D-Ala-D-Ala)-di-trans,octa-cis-undecaprenyl diphosphate + UDP-N-acetyl-alpha-D-glucosamine = beta-D-GlcNAc-(1-&gt;4)-Mur2Ac(oyl-L-Ala-gamma-D-Glu-L-Lys-D-Ala-D-Ala)-di-trans,octa-cis-undecaprenyl diphosphate + UDP + H(+). It functions in the pathway cell wall biogenesis; peptidoglycan biosynthesis. In terms of biological role, cell wall formation. Catalyzes the transfer of a GlcNAc subunit on undecaprenyl-pyrophosphoryl-MurNAc-pentapeptide (lipid intermediate I) to form undecaprenyl-pyrophosphoryl-MurNAc-(pentapeptide)GlcNAc (lipid intermediate II). The chain is UDP-N-acetylglucosamine--N-acetylmuramyl-(pentapeptide) pyrophosphoryl-undecaprenol N-acetylglucosamine transferase from Leuconostoc citreum (strain KM20).